Consider the following 953-residue polypeptide: Anion exchange protein 4 (953 aa).

Residues 20–41 are disordered; the sequence is SEQLDGDLGPGSGLDGPSDIDN. Transmembrane regions (helical) follow at residues 385–405, 413–433, 470–490, and 501–521; these read AVLYIYLATVTNAITFGGLLG, GVLESFLGTAVAGATFCLMAG, VGIWVATFCLALVATEASLLV, and FCALISLIFIYDAVGKMLNLI. The segment at 385-953 is membrane (anion exchange); the sequence is AVLYIYLATV…KAPEINISVN (569 aa). 2 N-linked (GlcNAc...) asparagine glycosylation sites follow: N546 and N570. The next 7 membrane-spanning stretches (helical) occupy residues 594–614, 635–655, 682–702, 728–748, 785–805, 807–827, and 869–889; these read VPDIAFFSLLLFFTSFLCAIA, FSSVLAILLGCGLDAFLGLAT, PWWLSVAAALPALLLSILIFM, LFCVAVLMLFTSALGLPWYVS, GLVVFILTGVSIFLAPVLKFI, MPVLYGIFLYMGVAALSSMQF, and LWVIKSTPAAIVFPLMLLGLV. Residues 916-927 are compositionally biased toward basic and acidic residues; the sequence is KTIPENRPEPEH. The disordered stretch occupies residues 916–938; it reads KTIPENRPEPEHLFSGNDSENSE. N-linked (GlcNAc...) asparagine glycans are attached at residues N932 and N949.

This sequence belongs to the anion exchanger (TC 2.A.31) family. In terms of tissue distribution, expressed in kidney and gastrointestinal tract. In kidney, it is highly expressed in the cortex, expressed at intermediate level in the outer medulla and not expressed in the inner medulla. It is expressed in the cecum, while it is absent in other segments of gastrointestinal tract. Highly expressed in the cortical collecting duct (CCD). Expressed in both alpha-intercalated cells and beta-intercalated cells in the CCD (at protein level).

The protein resides in the basolateral cell membrane. It carries out the reaction 2 hydrogencarbonate(out) + chloride(in) + Na(+)(out) = 2 hydrogencarbonate(in) + chloride(out) + Na(+)(in). The enzyme catalyses K(+)(in) + 2 hydrogencarbonate(in) + chloride(out) = K(+)(out) + 2 hydrogencarbonate(out) + chloride(in). The catalysed reaction is Li(+)(in) + 2 hydrogencarbonate(in) + chloride(out) = Li(+)(out) + 2 hydrogencarbonate(out) + chloride(in). It catalyses the reaction Rb(+)(in) + 2 hydrogencarbonate(in) + chloride(out) = Rb(+)(out) + 2 hydrogencarbonate(out) + chloride(in). It carries out the reaction Cs(+)(in) + 2 hydrogencarbonate(in) + chloride(out) = Cs(+)(out) + 2 hydrogencarbonate(out) + chloride(in). Its activity is regulated as follows. 4,4'-diisothiocyanatodihydrostilbene-2,2'- disulfonic acid (H2DIDS) potently inhibits chloride/hydrogencarbonate antiporter activity with 50% inhibition at about 5 uM. Completely inhibits chloride/hydrogencarbonate antiporter activity at 200 uM of 4,4'-diisothiocyano-trans-stilbene-2,2'-disulfonic acid (DIDS). Its function is as follows. Electroneutral Cl(-)/HCO3(-) antiporter that favors chloride ion entry and efflux of hydrogencarbonate and sodium ion across the basolateral membrane and may participate in salivary secretion. Also mediates Cl(-)/HCO3(-) exchange activity in the presence of K(+) as well as Cs(+), Li(+), and Rb(+). Does not contribute to Cl(-)/HCO3(-) exchanger in the apical membrane of the upper villous epithelium. The protein is Anion exchange protein 4 of Rattus norvegicus (Rat).